Consider the following 122-residue polypeptide: Basic phospholipase A2 Ts-G6D49 (122 aa).

Cystine bridges form between Cys-26–Cys-115, Cys-28–Cys-44, Cys-43–Cys-95, Cys-49–Cys-122, Cys-50–Cys-88, Cys-57–Cys-81, and Cys-75–Cys-86. Residues Tyr-27, Gly-29, and Gly-31 each contribute to the Ca(2+) site. The active site involves His-47. Residue Asp-48 participates in Ca(2+) binding. Asp-89 is a catalytic residue.

Requires Ca(2+) as cofactor. As to expression, expressed by the venom gland.

Its subcellular location is the secreted. The catalysed reaction is a 1,2-diacyl-sn-glycero-3-phosphocholine + H2O = a 1-acyl-sn-glycero-3-phosphocholine + a fatty acid + H(+). Functionally, snake venom phospholipase A2 that induces fast and sustaining local edema a few hours after injection (5-10 ug) in the hind paw, and prolongs the coagulation time of human plasma. Exhibits moderate hydrolytic activities and prefers the zwitterionic micelles (dPPC with Triton X-100) to the anionic micelles (dPPC with deoxycholate). PLA2 catalyzes the calcium-dependent hydrolysis of the 2-acyl groups in 3-sn-phosphoglycerides. This chain is Basic phospholipase A2 Ts-G6D49, found in Trimeresurus stejnegeri (Chinese green tree viper).